The sequence spans 529 residues: Type I inositol polyphosphate 5-phosphatase 5 (529 aa).

Catalytic regions lie at residues 371-386 and 451-466; these read DRVL…VALT and KRRT…WKGE.

Belongs to the inositol polyphosphate 5-phosphatase family.

Functionally, may be involved in the regulation of root hairs development. Required for restricting both the size of the root-hair initiation site and the width of the root hairs during the transition to tip growth, but is not required for normal subsequent tip growth. In Arabidopsis thaliana (Mouse-ear cress), this protein is Type I inositol polyphosphate 5-phosphatase 5.